We begin with the raw amino-acid sequence, 114 residues long: Hydrogenase maturation factor HypA (114 aa).

H2 provides a ligand contact to Ni(2+). C73, C76, C89, and C92 together coordinate Zn(2+).

This sequence belongs to the HypA/HybF family.

Involved in the maturation of [NiFe] hydrogenases. Required for nickel insertion into the metal center of the hydrogenase. The polypeptide is Hydrogenase maturation factor HypA (Caldanaerobacter subterraneus subsp. tengcongensis (strain DSM 15242 / JCM 11007 / NBRC 100824 / MB4) (Thermoanaerobacter tengcongensis)).